A 153-amino-acid chain; its full sequence is Small ribosomal subunit protein uS9 (153 aa).

Low complexity predominate over residues 1 to 19 (MTAPADEAPAVEDAPVAED). Disordered regions lie at residues 1–23 (MTAPADEAPAVEDAPVAEDIAPV) and 121–153 (LKKAGMLTRDSREKERKKYGLKKARKAPQYSKR). Residues 129 to 138 (RDSREKERKK) show a composition bias toward basic and acidic residues. A compositionally biased stretch (basic residues) spans 139 to 153 (YGLKKARKAPQYSKR).

It belongs to the universal ribosomal protein uS9 family.

The protein is Small ribosomal subunit protein uS9 of Saccharopolyspora erythraea (strain ATCC 11635 / DSM 40517 / JCM 4748 / NBRC 13426 / NCIMB 8594 / NRRL 2338).